The chain runs to 315 residues: WD repeat domain-containing protein 83 (315 aa).

WD repeat units follow at residues 23 to 62 (CQQG…LLKT), 65 to 104 (GHGY…VTRK), 107 to 146 (GHAG…MEPI), 151 to 188 (ESQD…LQVD), 189 to 228 (YIGS…MLGE), 233 to 272 (VNKG…LTLK), and 275 to 313 (VGKA…AAEN).

This sequence belongs to the WD repeat MORG1 family.

The protein localises to the cytoplasm. Its function is as follows. Molecular scaffold protein for various multimeric protein complexes. Acts as a module in the assembly of a multicomponent scaffold for the ERK pathway, linking ERK responses to specific agonists. Also involved in response to hypoxia by acting as a negative regulator of HIF1A/HIF-1-alpha. This chain is WD repeat domain-containing protein 83 (wdr83), found in Danio rerio (Zebrafish).